We begin with the raw amino-acid sequence, 229 residues long: Putative N-acetylmannosamine-6-phosphate 2-epimerase (229 aa).

This sequence belongs to the NanE family.

It catalyses the reaction an N-acyl-D-glucosamine 6-phosphate = an N-acyl-D-mannosamine 6-phosphate. The protein operates within amino-sugar metabolism; N-acetylneuraminate degradation; D-fructose 6-phosphate from N-acetylneuraminate: step 3/5. Converts N-acetylmannosamine-6-phosphate (ManNAc-6-P) to N-acetylglucosamine-6-phosphate (GlcNAc-6-P). The polypeptide is Putative N-acetylmannosamine-6-phosphate 2-epimerase (Escherichia fergusonii (strain ATCC 35469 / DSM 13698 / CCUG 18766 / IAM 14443 / JCM 21226 / LMG 7866 / NBRC 102419 / NCTC 12128 / CDC 0568-73)).